The sequence spans 96 residues: Small ribosomal subunit protein bS6 (96 aa).

Belongs to the bacterial ribosomal protein bS6 family.

Functionally, binds together with bS18 to 16S ribosomal RNA. The protein is Small ribosomal subunit protein bS6 (rpsF) of Mycobacterium bovis (strain ATCC BAA-935 / AF2122/97).